The following is a 362-amino-acid chain: Chorismate synthase (362 aa).

NADP(+) contacts are provided by Arg-48 and Arg-54. Residues 131-133 (RSS), 243-244 (NA), Gly-287, 302-306 (KPTSS), and Arg-328 contribute to the FMN site.

The protein belongs to the chorismate synthase family. Homotetramer. FMNH2 serves as cofactor.

The enzyme catalyses 5-O-(1-carboxyvinyl)-3-phosphoshikimate = chorismate + phosphate. Its pathway is metabolic intermediate biosynthesis; chorismate biosynthesis; chorismate from D-erythrose 4-phosphate and phosphoenolpyruvate: step 7/7. Functionally, catalyzes the anti-1,4-elimination of the C-3 phosphate and the C-6 proR hydrogen from 5-enolpyruvylshikimate-3-phosphate (EPSP) to yield chorismate, which is the branch point compound that serves as the starting substrate for the three terminal pathways of aromatic amino acid biosynthesis. This reaction introduces a second double bond into the aromatic ring system. This Rhodopseudomonas palustris (strain ATCC BAA-98 / CGA009) protein is Chorismate synthase.